Consider the following 67-residue polypeptide: DNA-directed RNA polymerase subunit omega (67 aa).

It belongs to the RNA polymerase subunit omega family. The RNAP catalytic core consists of 2 alpha, 1 beta, 1 beta' and 1 omega subunit. When a sigma factor is associated with the core the holoenzyme is formed, which can initiate transcription.

It catalyses the reaction RNA(n) + a ribonucleoside 5'-triphosphate = RNA(n+1) + diphosphate. Promotes RNA polymerase assembly. Latches the N- and C-terminal regions of the beta' subunit thereby facilitating its interaction with the beta and alpha subunits. This is DNA-directed RNA polymerase subunit omega from Cupriavidus metallidurans (strain ATCC 43123 / DSM 2839 / NBRC 102507 / CH34) (Ralstonia metallidurans).